The chain runs to 145 residues: Basic phospholipase A2 cPt09 (145 aa).

Residues 1 to 21 (MYPAHLLVLLAVCVSLLGAST) form the signal peptide. Positions 22-27 (IPPLPL) are excised as a propeptide. Disulfide bonds link Cys-38/Cys-98, Cys-54/Cys-144, Cys-56/Cys-72, Cys-71/Cys-125, Cys-78/Cys-118, Cys-87/Cys-111, and Cys-105/Cys-116. Residues Tyr-55, Gly-57, and Gly-59 each contribute to the Ca(2+) site. His-75 is an active-site residue. Residue Asp-76 participates in Ca(2+) binding. Asp-119 is a catalytic residue.

The protein belongs to the phospholipase A2 family. Group I subfamily. D49 sub-subfamily. Requires Ca(2+) as cofactor. Expressed by the venom gland.

The protein resides in the secreted. It catalyses the reaction a 1,2-diacyl-sn-glycero-3-phosphocholine + H2O = a 1-acyl-sn-glycero-3-phosphocholine + a fatty acid + H(+). In terms of biological role, PLA2 catalyzes the calcium-dependent hydrolysis of the 2-acyl groups in 3-sn-phosphoglycerides. This chain is Basic phospholipase A2 cPt09, found in Laticauda semifasciata (Black-banded sea krait).